The sequence spans 690 residues: Eukaryotic translation initiation factor 3 subunit B (690 aa).

A compositionally biased stretch (basic and acidic residues) spans 1–11 (MAKKKSEEHSS). A disordered region spans residues 1-33 (MAKKKSEEHSSADANDSDYQEEPNFDDPPNFVD). The span at 15 to 25 (NDSDYQEEPNF) shows a compositional bias: acidic residues. In terms of domain architecture, RRM spans 57-141 (SVVVVDNIPK…HTFAVNLFTD (85 aa)). WD repeat units lie at residues 207–246 (TRERFTDTFVKWSPLGTYVVTFHKPGVAIWGGSNFQKIQK), 293–331 (DGMSVLSMFRWSHDDKFVARMGENSIHIYETPSFYLLDL), 334–369 (IKIPGIRGFSWSPTDNVIAYWVEEQNQIPARVTLME), 442–484 (EIRE…KPSL), and 530–575 (PDHF…IKRT). The stretch at 614-645 (QKDRLRLTRASKELLEKRSQLRETFMEYRNKR) forms a coiled coil.

It belongs to the eIF-3 subunit B family. In terms of assembly, component of the eukaryotic translation initiation factor 3 (eIF-3) complex. The eIF-3 complex interacts with pix. Interacts with mxt.

Its subcellular location is the cytoplasm. Its function is as follows. RNA-binding component of the eukaryotic translation initiation factor 3 (eIF-3) complex, which is involved in protein synthesis of a specialized repertoire of mRNAs and, together with other initiation factors, stimulates binding of mRNA and methionyl-tRNAi to the 40S ribosome. The eIF-3 complex specifically targets and initiates translation of a subset of mRNAs involved in cell proliferation. This chain is Eukaryotic translation initiation factor 3 subunit B, found in Drosophila willistoni (Fruit fly).